The chain runs to 904 residues: E3 ubiquitin-protein ligase HACE1 (904 aa).

7 ANK repeats span residues 34–63, 68–97, 101–130, 134–163, 167–196, 200–230, and 232–261; these read AVYT…DVNY, VKRS…NPNY, SGCT…DVNI, EGLT…NVDV, MGQT…DINR, SGAT…YLPD, and NGVT…RLFQ. Residues 569–904 enclose the HECT domain; that stretch reads SNEKLKQGIA…HCGSYGYTMA (336 aa). The Glycyl thioester intermediate role is filled by Cys871.

The protein resides in the golgi apparatus. The protein localises to the golgi stack membrane. Its subcellular location is the cytoplasm. It is found in the endoplasmic reticulum. The catalysed reaction is S-ubiquitinyl-[E2 ubiquitin-conjugating enzyme]-L-cysteine + [acceptor protein]-L-lysine = [E2 ubiquitin-conjugating enzyme]-L-cysteine + N(6)-ubiquitinyl-[acceptor protein]-L-lysine.. It functions in the pathway protein modification; protein ubiquitination. In terms of biological role, E3 ubiquitin-protein ligase involved in Golgi membrane fusion and regulation of small GTPases. Acts as a regulator of Golgi membrane dynamics during the cell cycle: recruited to Golgi membrane by Rab proteins and regulates postmitotic Golgi membrane fusion. Acts by mediating ubiquitination during mitotic Golgi disassembly, ubiquitination serving as a signal for Golgi reassembly later, after cell division. This chain is E3 ubiquitin-protein ligase HACE1 (hace1), found in Danio rerio (Zebrafish).